A 91-amino-acid polypeptide reads, in one-letter code: Glycophorin-B (91 aa).

A signal peptide spans 1–19; the sequence is MYGKIIFVLLLSEIVSISA. Over 20–59 the chain is Extracellular; that stretch reads LSTTEVAMHTSTSSSVTKSYISSQTNGETGQLVHRFTVPA. Thr36 is a glycosylation site (O-linked (GalNAc...) threonine). Ser38 carries an O-linked (GalNAc...) serine glycan. A helical transmembrane segment spans residues 60–81; it reads PVVIILIILCVMAGIIGTILLI. Over 82-91 the chain is Cytoplasmic; that stretch reads SYSIRRLIKA.

The protein belongs to the glycophorin-A family. Component of the ankyrin-1 complex in the erythrocyte, composed of ANK1, RHCE, RHAG, SLC4A1, EPB42, GYPA, GYPB and AQP1. Interacts (via the N-terminal) with RHAG; this interaction bridges the (RHAG)2(RHCE) heterotrimer with the SLC4A1 Band 3 I dimer complexed with GYPA. In terms of processing, the N-terminal extracellular domain is heavily glycosylated on serine and threonine residues.

It localises to the cell membrane. Its function is as follows. Component of the ankyrin-1 complex, a multiprotein complex involved in the stability and shape of the erythrocyte membrane. The sequence is that of Glycophorin-B from Homo sapiens (Human).